Here is a 390-residue protein sequence, read N- to C-terminus: Tuftelin (390 aa).

Coiled-coil stretches lie at residues 88–126 (DKMI…KLDR) and 162–351 (DTHI…IEKQ). The residue at position 171 (Ser171) is a Phosphoserine.

The protein belongs to the tuftelin family. In terms of assembly, interacts with TFIP11. Present in the extracellular enamel and is mainly associated with the crystal component.

It is found in the secreted. Its function is as follows. Involved in the structural organization of the epidermis. Involved in the mineralization and structural organization of enamel. This Bos taurus (Bovine) protein is Tuftelin (TUFT1).